The sequence spans 178 residues: Ribosome maturation factor RimP (178 aa).

Belongs to the RimP family.

Its subcellular location is the cytoplasm. Required for maturation of 30S ribosomal subunits. This chain is Ribosome maturation factor RimP, found in Maricaulis maris (strain MCS10) (Caulobacter maris).